The sequence spans 379 residues: Alcohol dehydrogenase 2 (379 aa).

Residues Cys47, Thr49, His69, Cys99, Cys102, Cys105, Cys113, and Cys177 each coordinate Zn(2+). An alcohol contacts are provided by Thr49 and His69. Thr49 is a binding site for NAD(+). Residues 202-207 (GLGAVG), Asp226, Lys231, Thr272, Val295, 295-297 (VGV), Phe322, and Arg372 each bind NAD(+).

It belongs to the zinc-containing alcohol dehydrogenase family. In terms of assembly, homodimer. Zn(2+) is required as a cofactor.

It localises to the cytoplasm. It carries out the reaction a primary alcohol + NAD(+) = an aldehyde + NADH + H(+). It catalyses the reaction a secondary alcohol + NAD(+) = a ketone + NADH + H(+). In Zea mays (Maize), this protein is Alcohol dehydrogenase 2 (ADH2).